A 38-amino-acid polypeptide reads, in one-letter code: Photosystem II reaction center protein L (38 aa).

The chain crosses the membrane as a helical span at residues 17–37 (GLYWGLLLIFVLAVLFSSYFF).

The protein belongs to the PsbL family. As to quaternary structure, PSII is composed of 1 copy each of membrane proteins PsbA, PsbB, PsbC, PsbD, PsbE, PsbF, PsbH, PsbI, PsbJ, PsbK, PsbL, PsbM, PsbT, PsbX, PsbY, PsbZ, Psb30/Ycf12, at least 3 peripheral proteins of the oxygen-evolving complex and a large number of cofactors. It forms dimeric complexes.

It localises to the plastid. It is found in the chloroplast thylakoid membrane. Its function is as follows. One of the components of the core complex of photosystem II (PSII). PSII is a light-driven water:plastoquinone oxidoreductase that uses light energy to abstract electrons from H(2)O, generating O(2) and a proton gradient subsequently used for ATP formation. It consists of a core antenna complex that captures photons, and an electron transfer chain that converts photonic excitation into a charge separation. This subunit is found at the monomer-monomer interface and is required for correct PSII assembly and/or dimerization. This is Photosystem II reaction center protein L from Staurastrum punctulatum (Green alga).